Here is a 502-residue protein sequence, read N- to C-terminus: Putative diacyglycerol O-acyltransferase MT1809 (502 aa).

The Proton acceptor role is filled by H174.

It belongs to the long-chain O-acyltransferase family.

It catalyses the reaction an acyl-CoA + a 1,2-diacyl-sn-glycerol = a triacyl-sn-glycerol + CoA. Its pathway is glycerolipid metabolism; triacylglycerol biosynthesis. The sequence is that of Putative diacyglycerol O-acyltransferase MT1809 from Mycobacterium tuberculosis (strain CDC 1551 / Oshkosh).